The sequence spans 143 residues: Ribosome maturation factor RimP (143 aa).

The protein belongs to the RimP family.

The protein localises to the cytoplasm. Its function is as follows. Required for maturation of 30S ribosomal subunits. This Neisseria gonorrhoeae (strain ATCC 700825 / FA 1090) protein is Ribosome maturation factor RimP.